Reading from the N-terminus, the 204-residue chain is uncharacterized protein (204 aa).

6 helical membrane passes run 19 to 39 (TANP…LLNL), 42 to 62 (AGLF…GGIA), 78 to 98 (GTVA…LLVI), 116 to 136 (PVAM…MFIA), 143 to 163 (GIQV…AGEI), and 167 to 187 (ALIT…AMYV).

This sequence belongs to the acetate uptake transporter (AceTr) (TC 2.A.96) family.

The protein localises to the cell membrane. This is an uncharacterized protein from Methanothermobacter thermautotrophicus (strain ATCC 29096 / DSM 1053 / JCM 10044 / NBRC 100330 / Delta H) (Methanobacterium thermoautotrophicum).